The following is a 226-amino-acid chain: Cytidylate kinase (226 aa).

9-17 (GPAGAGKST) contributes to the ATP binding site.

This sequence belongs to the cytidylate kinase family. Type 1 subfamily.

The protein localises to the cytoplasm. The catalysed reaction is CMP + ATP = CDP + ADP. It catalyses the reaction dCMP + ATP = dCDP + ADP. The polypeptide is Cytidylate kinase (Clostridium tetani (strain Massachusetts / E88)).